Consider the following 349-residue polypeptide: Cdc42 effector protein 4 (349 aa).

Position 5 is an N6-methyllysine (Lys5). Residue Ser18 is modified to Phosphoserine. One can recognise a CRIB domain in the interval 27–41 (ISAPLGDFRHTMHVG). Ser64, Ser103, Ser107, and Ser116 each carry phosphoserine. A compositionally biased stretch (basic and acidic residues) spans 123–132 (KEAAEKDSSK). 3 disordered regions span residues 123–172 (KEAA…LLDE), 220–240 (QWGS…GPSS), and 278–349 (GWAV…EIRV). A phosphoserine mark is found at Ser136, Ser138, Ser140, Ser154, Ser165, Ser223, Ser285, and Ser288. The segment covering 280-308 (AVVAPSPSSARSVGSHTTRDSSSLSSYTS) has biased composition (low complexity). The segment covering 311–322 (LEERSPAFRGPD) has biased composition (basic and acidic residues). Over residues 338 to 349 (FMDEEEEDEIRV) the composition is skewed to acidic residues.

The protein belongs to the BORG/CEP family. In terms of assembly, interacts with CDC42 and RHOQ, in a GTP-dependent manner. As to expression, ubiquitous.

It is found in the endomembrane system. The protein localises to the cytoplasm. Its subcellular location is the cytoskeleton. Probably involved in the organization of the actin cytoskeleton. May act downstream of CDC42 to induce actin filament assembly leading to cell shape changes. Induces pseudopodia formation, when overexpressed in fibroblasts. The chain is Cdc42 effector protein 4 (Cdc42ep4) from Mus musculus (Mouse).